The primary structure comprises 327 residues: Polyprenyl transferase andD (327 aa).

The next 8 helical transmembrane spans lie at 49 to 69, 81 to 101, 140 to 160, 174 to 194, 201 to 221, 244 to 264, 271 to 291, and 307 to 327; these read LGYI…ASIA, ITLL…WDDI, FAFV…MLFF, PQLI…GLNL, IPMA…DIIY, CLDA…VIAG, APFF…LAMA, and CCTS…VWRS.

It belongs to the UbiA prenyltransferase family. Requires Mg(2+) as cofactor.

The protein localises to the membrane. It participates in secondary metabolite biosynthesis; terpenoid biosynthesis. In terms of biological role, polyprenyl transferase; part of the gene cluster that mediates the biosynthesis of anditomin, a fungal meroterpenoid. The first step of the pathway is the synthesis of 3,5-dimethylorsellinic acid (DMOA) by the polyketide synthase andM. DMOA is then converted to the phthalide compound 5,7-dihydroxy-4,6-dimethylphthalide (DHDMP) by the cytochrome P450 monooxygenase andK, which is further prenylated by the prenyltransferase andD to yield farnesyl-DHDMP. Further epoxidation by the FAD-dependent monooxygenase andE leads to epoxyfarnesyl-DHDMP. The next step involves the terpene cyclase andB that converts epoxyfarnesyl-DHDMP into preandiloid A through opening of the epoxide ring followed by the cyclization of the farnesyl moiety. Preandiloid A is in turn oxidized at the C-3 hydroxyl group to yield preandiloid B by the dehydrogenase andC. The dioxygenase andA is solely responsible for the dehydrogenation of preandiloid B leading to the enone preandiloid C, as well as for the intriguing structural rearrangement to generate the bicyclo[2.2.2]octane core, transforming preandiloid C into andiconin. FAD-binding monooxygenase andJ then produces andilesin D which is reduced by dehydrogenase andI to yield andilesin A. Action of acetyltransferase andG followed by a spontaneous acetate elimination leads then to andilesin B, which is in turn substrate of the short chain dehydrogenase andH to yield andilesin C. Finally, the dioxygenase andF catalyzes the transformation of andilesin C to anditomin. The sequence is that of Polyprenyl transferase andD from Emericella variicolor (Aspergillus stellatus).